Consider the following 181-residue polypeptide: Peptide deformylase 1 (181 aa).

Fe cation is bound by residues cysteine 106 and histidine 148. Residue glutamate 149 is part of the active site. Histidine 152 provides a ligand contact to Fe cation.

It belongs to the polypeptide deformylase family. It depends on Fe(2+) as a cofactor.

It carries out the reaction N-terminal N-formyl-L-methionyl-[peptide] + H2O = N-terminal L-methionyl-[peptide] + formate. Its function is as follows. Removes the formyl group from the N-terminal Met of newly synthesized proteins. Requires at least a dipeptide for an efficient rate of reaction. N-terminal L-methionine is a prerequisite for activity but the enzyme has broad specificity at other positions. The chain is Peptide deformylase 1 from Burkholderia multivorans (strain ATCC 17616 / 249).